A 252-amino-acid polypeptide reads, in one-letter code: Intraflagellar transport associated protein 2 (252 aa).

Residues 35 to 42 (GPPKAGKT) and 118 to 125 (WDVSGDKK) contribute to the GTP site.

The protein belongs to the small GTPase superfamily. Rab family. In terms of assembly, component of the IFT complex B composed of at least che-2, che-13, dyf-1, dyf-3, dyf-6, dyf-11, dyf-13, ift-20, ift-74, ift-81, ifta-2, osm-1, osm-5 and osm-6. As to expression, ciliated sensory neurons.

The protein localises to the cytoplasm. It localises to the cytoskeleton. Its subcellular location is the cilium axoneme. In terms of biological role, component of the intraflagellar transport (IFT) complex B required for transport of proteins in the motile cilium. May be required for ciliary entrance and transport of specific ciliary cargo proteins such as che-3 which are related to motility. Regulates specific signaling activities in the cilia, such as the daf-2/insulin receptor-like transduction pathway. This chain is Intraflagellar transport associated protein 2, found in Caenorhabditis elegans.